Here is a 1157-residue protein sequence, read N- to C-terminus: Pesticidal crystal protein Cry9Ca (1157 aa).

Belongs to the delta endotoxin family.

In terms of biological role, promotes colloidosmotic lysis by binding to the midgut epithelial cells of Lepidoptera larvae. Has a fairly broad spectrum of activity against members of the Pyralidae, Plutellidae, Sphingidae and Noctuidae families. It was the first insecticidal crystal protein characterized with activity against cutworms. No activity is observed against some beetles, such as the Colorado potato beetle. This chain is Pesticidal crystal protein Cry9Ca (cry9Ca), found in Bacillus thuringiensis subsp. tolworthi.